The sequence spans 551 residues: Arginine--tRNA ligase (551 aa).

The 'HIGH' region signature appears at 123–133; the sequence is ANPTGPLTIGR.

Belongs to the class-I aminoacyl-tRNA synthetase family. As to quaternary structure, monomer.

Its subcellular location is the cytoplasm. It carries out the reaction tRNA(Arg) + L-arginine + ATP = L-arginyl-tRNA(Arg) + AMP + diphosphate. The sequence is that of Arginine--tRNA ligase from Chlorobium phaeobacteroides (strain DSM 266 / SMG 266 / 2430).